The primary structure comprises 393 residues: Cysteine protease ATG4B (393 aa).

The active-site Nucleophile is C73. Residues D278 and H280 contribute to the active site. An LIR motif is present at residues 388–391; sequence FEIL.

This sequence belongs to the peptidase C54 family.

The protein localises to the cytoplasm. The protein resides in the cytosol. It is found in the cytoplasmic vesicle. It localises to the autophagosome. Its subcellular location is the endoplasmic reticulum. The protein localises to the mitochondrion. The catalysed reaction is [protein]-C-terminal L-amino acid-glycyl-phosphatidylethanolamide + H2O = [protein]-C-terminal L-amino acid-glycine + a 1,2-diacyl-sn-glycero-3-phosphoethanolamine. It carries out the reaction [protein]-C-terminal L-amino acid-glycyl-phosphatidylserine + H2O = [protein]-C-terminal L-amino acid-glycine + a 1,2-diacyl-sn-glycero-3-phospho-L-serine. In terms of biological role, cysteine protease that plays a key role in autophagy by mediating both proteolytic activation and delipidation of ATG8 family proteins. Required for canonical autophagy (macroautophagy), non-canonical autophagy as well as for mitophagy. The protease activity is required for proteolytic activation of ATG8 family proteins: cleaves the C-terminal amino acid of ATG8 proteins to reveal a C-terminal glycine. Exposure of the glycine at the C-terminus is essential for ATG8 proteins conjugation to phosphatidylethanolamine (PE) and insertion to membranes, which is necessary for autophagy. Protease activity is also required to counteract formation of high-molecular weight conjugates of ATG8 proteins (ATG8ylation): acts as a deubiquitinating-like enzyme that removes ATG8 conjugated to other proteins, such as ATG3. In addition to the protease activity, also mediates delipidation of ATG8 family proteins. Catalyzes delipidation of PE-conjugated forms of ATG8 proteins during macroautophagy. Also involved in non-canonical autophagy, a parallel pathway involving conjugation of ATG8 proteins to single membranes at endolysosomal compartments, by catalyzing delipidation of ATG8 proteins conjugated to phosphatidylserine (PS). The polypeptide is Cysteine protease ATG4B (Gallus gallus (Chicken)).